A 229-amino-acid polypeptide reads, in one-letter code: Large ribosomal subunit protein uL1 (229 aa).

As to quaternary structure, part of the 50S ribosomal subunit.

In terms of biological role, directly binds to 23S rRNA. Forms what is known as the L1 stalk, which protrudes beyond the 70S ribosome surface. The stalk is preferentially stabilized in 70S versus 50S crystals. Interacts with the E site tRNA, blocking the exit path. This blockage implies that this section of the ribosome must be able to move to release the deacetylated tRNA. Protein L1 is also a translational repressor protein, it controls the translation of the L11 operon by binding to its mRNA. The polypeptide is Large ribosomal subunit protein uL1 (rplA) (Thermus thermophilus (strain ATCC 27634 / DSM 579 / HB8)).